We begin with the raw amino-acid sequence, 218 residues long: N-(5'-phosphoribosyl)anthranilate isomerase (218 aa).

The protein belongs to the TrpF family.

The enzyme catalyses N-(5-phospho-beta-D-ribosyl)anthranilate = 1-(2-carboxyphenylamino)-1-deoxy-D-ribulose 5-phosphate. It functions in the pathway amino-acid biosynthesis; L-tryptophan biosynthesis; L-tryptophan from chorismate: step 3/5. The sequence is that of N-(5'-phosphoribosyl)anthranilate isomerase from Bordetella bronchiseptica (strain ATCC BAA-588 / NCTC 13252 / RB50) (Alcaligenes bronchisepticus).